The primary structure comprises 347 residues: MALLFSLILAICTRPGFLASPSGVRLVGGLHRCEGRVEVEQKGQWGTVCDDGWDIKDVAVLCRELGCGAASGTPSGILYEPPAEKEQKVLIQSVSCTGTEDTLAQCEQEEVYDCSHDEDAGASCENPESSFSPVPEGVRLADGPGHCKGRVEVKHQNQWYTVCQTGWSLRAAKVVCRQLGCGRAVLTQKRCNKHAYGRKPIWLSQMSCSGREATLQDCPSGPWGKNTCNHDEDTWVECEDPFDLRLVGGDNLCSGRLEVLHKGVWGSVCDDNWGEKEDQVVCKQLGCGKSLSPSFRDRKCYGPGVGRIWLDNVRCSGEEQSLEQCQHRFWGFHDCTHQEDVAVICSG.

A signal peptide spans 1–19 (MALLFSLILAICTRPGFLA). SRCR domains lie at 24-125 (VRLV…ASCE), 138-239 (VRLA…VECE), and 244-346 (LRLV…VICS). Intrachain disulfides connect Cys-33/Cys-67, Cys-49/Cys-114, Cys-62/Cys-124, Cys-96/Cys-106, Cys-163/Cys-228, Cys-176/Cys-238, Cys-208/Cys-218, Cys-253/Cys-287, Cys-269/Cys-335, Cys-282/Cys-345, and Cys-315/Cys-325.

Interacts with FASN; the interaction is direct. Interacts (via SRCR2 and SRCR3) with pentameric IgM (via Fc region); disulfide-linked. Post-translationally, not N-glycosylated. Probably not O-glycosylated. Expressed in spleen, lymph node, thymus, bone marrow, and fetal liver, but not in non-lymphoid tissues.

The protein localises to the secreted. It localises to the cytoplasm. Functionally, secreted protein that acts as a key regulator of lipid synthesis: mainly expressed by macrophages in lymphoid and inflamed tissues and regulates mechanisms in inflammatory responses, such as infection or atherosclerosis. Able to inhibit lipid droplet size in adipocytes. Following incorporation into mature adipocytes via CD36-mediated endocytosis, associates with cytosolic FASN, inhibiting fatty acid synthase activity and leading to lipolysis, the degradation of triacylglycerols into glycerol and free fatty acids (FFA). CD5L-induced lipolysis occurs with progression of obesity: participates in obesity-associated inflammation following recruitment of inflammatory macrophages into adipose tissues, a cause of insulin resistance and obesity-related metabolic disease. Regulation of intracellular lipids mediated by CD5L has a direct effect on transcription regulation mediated by nuclear receptors ROR-gamma (RORC). Acts as a key regulator of metabolic switch in T-helper Th17 cells. Regulates the expression of pro-inflammatory genes in Th17 cells by altering the lipid content and limiting synthesis of cholesterol ligand of RORC, the master transcription factor of Th17-cell differentiation. CD5L is mainly present in non-pathogenic Th17 cells, where it decreases the content of polyunsaturated fatty acyls (PUFA), affecting two metabolic proteins MSMO1 and CYP51A1, which synthesize ligands of RORC, limiting RORC activity and expression of pro-inflammatory genes. Participates in obesity-associated autoimmunity via its association with IgM, interfering with the binding of IgM to Fcalpha/mu receptor and enhancing the development of long-lived plasma cells that produce high-affinity IgG autoantibodies. Also acts as an inhibitor of apoptosis in macrophages: promotes macrophage survival from the apoptotic effects of oxidized lipids in case of atherosclerosis. Involved in early response to microbial infection against various pathogens by acting as a pattern recognition receptor and by promoting autophagy. This chain is CD5 antigen-like (CD5L), found in Homo sapiens (Human).